The chain runs to 181 residues: ATP synthase subunit delta (181 aa).

Belongs to the ATPase delta chain family. As to quaternary structure, F-type ATPases have 2 components, F(1) - the catalytic core - and F(0) - the membrane proton channel. F(1) has five subunits: alpha(3), beta(3), gamma(1), delta(1), epsilon(1). F(0) has three main subunits: a(1), b(2) and c(10-14). The alpha and beta chains form an alternating ring which encloses part of the gamma chain. F(1) is attached to F(0) by a central stalk formed by the gamma and epsilon chains, while a peripheral stalk is formed by the delta and b chains.

It is found in the cell membrane. Functionally, f(1)F(0) ATP synthase produces ATP from ADP in the presence of a proton or sodium gradient. F-type ATPases consist of two structural domains, F(1) containing the extramembraneous catalytic core and F(0) containing the membrane proton channel, linked together by a central stalk and a peripheral stalk. During catalysis, ATP synthesis in the catalytic domain of F(1) is coupled via a rotary mechanism of the central stalk subunits to proton translocation. In terms of biological role, this protein is part of the stalk that links CF(0) to CF(1). It either transmits conformational changes from CF(0) to CF(1) or is implicated in proton conduction. This Mycoplasma capricolum subsp. capricolum (strain California kid / ATCC 27343 / NCTC 10154) protein is ATP synthase subunit delta.